A 385-amino-acid chain; its full sequence is Methylthioribose-1-phosphate isomerase (385 aa).

The active-site Proton donor is the aspartate 255.

It belongs to the eIF-2B alpha/beta/delta subunits family. MtnA subfamily.

The protein resides in the cytoplasm. It is found in the nucleus. It carries out the reaction 5-(methylsulfanyl)-alpha-D-ribose 1-phosphate = 5-(methylsulfanyl)-D-ribulose 1-phosphate. Its pathway is amino-acid biosynthesis; L-methionine biosynthesis via salvage pathway; L-methionine from S-methyl-5-thio-alpha-D-ribose 1-phosphate: step 1/6. Its function is as follows. Catalyzes the interconversion of methylthioribose-1-phosphate (MTR-1-P) into methylthioribulose-1-phosphate (MTRu-1-P). The polypeptide is Methylthioribose-1-phosphate isomerase (mri1) (Aspergillus clavatus (strain ATCC 1007 / CBS 513.65 / DSM 816 / NCTC 3887 / NRRL 1 / QM 1276 / 107)).